The chain runs to 635 residues: CCR4-NOT transcription complex subunit 10 (635 aa).

Residue Thr45 is modified to Phosphothreonine. Residues 131–165 (LVARLEALEKAMAALVATLQLQLLLATNQLNRAEA) adopt a coiled-coil conformation. Disordered regions lie at residues 396–416 (EERQ…QSAG) and 450–474 (SEDV…DNNF). Positions 456–470 (PEPKDPTQESWRHPQ) are enriched in basic and acidic residues.

This sequence belongs to the CNOT10 family. As to quaternary structure, component of the CCR4-NOT complex. CNOT10 and CNOT11 form a subcomplex docked to the CNOT1 scaffold.

It is found in the cytoplasm. Its subcellular location is the nucleus. Functionally, component of the CCR4-NOT complex which is one of the major cellular mRNA deadenylases and is linked to various cellular processes including bulk mRNA degradation, miRNA-mediated repression, translational repression during translational initiation and general transcription regulation. Additional complex functions may be a consequence of its influence on mRNA expression. Is not required for association of CNOT7 to the CCR4-NOT complex. The protein is CCR4-NOT transcription complex subunit 10 (Not10) of Drosophila melanogaster (Fruit fly).